Here is a 630-residue protein sequence, read N- to C-terminus: Mannosyl-oligosaccharide 1,2-alpha-mannosidase IC (630 aa).

The Cytoplasmic portion of the chain corresponds to 1-22 (MLMRKVPGFVPASPWGLRLPQK). A helical; Signal-anchor for type II membrane protein transmembrane segment spans residues 23–43 (FLFLLFLSGLVTLCFGALFLL). Residues 44–630 (PHSSRLKRLF…DSSGRAWGRH (587 aa)) are Lumenal-facing. The disordered stretch occupies residues 74–140 (PAREQEPPPN…ASRPGDEGVP (67 aa)). Over residues 80 to 89 (PPPNPAPAAP) the composition is skewed to pro residues. The span at 102–113 (PRRRKGGLRRTR) shows a compositional bias: basic residues. Residue Ser-164 is modified to Phosphoserine. An N-linked (GlcNAc...) asparagine glycan is attached at Asn-250. A disulfide bridge connects residues Cys-453 and Cys-485. The active-site Proton donor is the Glu-499. A Ca(2+)-binding site is contributed by Thr-610. The N-linked (GlcNAc...) asparagine glycan is linked to Asn-618.

This sequence belongs to the glycosyl hydrolase 47 family. It depends on Ca(2+) as a cofactor. In terms of tissue distribution, expressed in most tissues with the exception of lung, muscle and pancreas. Highly expressed in placenta.

It is found in the golgi apparatus membrane. The catalysed reaction is N(4)-(alpha-D-Man-(1-&gt;2)-alpha-D-Man-(1-&gt;2)-alpha-D-Man-(1-&gt;3)-[alpha-D-Man-(1-&gt;2)-alpha-D-Man-(1-&gt;3)-[alpha-D-Man-(1-&gt;2)-alpha-D-Man-(1-&gt;6)]-alpha-D-Man-(1-&gt;6)]-beta-D-Man-(1-&gt;4)-beta-D-GlcNAc-(1-&gt;4)-beta-D-GlcNAc)-L-asparaginyl-[protein] (N-glucan mannose isomer 9A1,2,3B1,2,3) + 4 H2O = N(4)-(alpha-D-Man-(1-&gt;3)-[alpha-D-Man-(1-&gt;3)-[alpha-D-Man-(1-&gt;6)]-alpha-D-Man-(1-&gt;6)]-beta-D-Man-(1-&gt;4)-beta-D-GlcNAc-(1-&gt;4)-beta-D-GlcNAc)-L-asparaginyl-[protein] (N-glucan mannose isomer 5A1,2) + 4 beta-D-mannose. It carries out the reaction N(4)-(alpha-D-Man-(1-&gt;2)-alpha-D-Man-(1-&gt;2)-alpha-D-Man-(1-&gt;3)-[alpha-D-Man-(1-&gt;3)-[alpha-D-Man-(1-&gt;2)-alpha-D-Man-(1-&gt;6)]-alpha-D-Man-(1-&gt;6)]-beta-D-Man-(1-&gt;4)-beta-D-GlcNAc-(1-&gt;4)-beta-D-GlcNAc)-L-asparaginyl-[protein] (N-glucan mannose isomer 8A1,2,3B1,3) + 3 H2O = N(4)-(alpha-D-Man-(1-&gt;3)-[alpha-D-Man-(1-&gt;3)-[alpha-D-Man-(1-&gt;6)]-alpha-D-Man-(1-&gt;6)]-beta-D-Man-(1-&gt;4)-beta-D-GlcNAc-(1-&gt;4)-beta-D-GlcNAc)-L-asparaginyl-[protein] (N-glucan mannose isomer 5A1,2) + 3 beta-D-mannose. The protein operates within protein modification; protein glycosylation. With respect to regulation, inhibited by both 1-deoxymannojirimycin and kifunensine. Its function is as follows. Involved in the maturation of Asn-linked oligosaccharides. Trim alpha-1,2-linked mannose residues from Man(9)GlcNAc(2) to produce first Man(8)GlcNAc(2) then Man(6)GlcNAc and a small amount of Man(5)GlcNAc. This Homo sapiens (Human) protein is Mannosyl-oligosaccharide 1,2-alpha-mannosidase IC (MAN1C1).